Here is a 104-residue protein sequence, read N- to C-terminus: MNNTEFHELVDEKLQLLEDMIDDSGADIEPVITGNVLTLEFENRSQIVINKQEPMHEIWLASKSGGFHFSYVDEKWTCSKTGMEFIEMVKEECQKHADEEIEWV.

It belongs to the frataxin family.

In terms of biological role, involved in iron-sulfur (Fe-S) cluster assembly. May act as a regulator of Fe-S biogenesis. The sequence is that of Iron-sulfur cluster assembly protein CyaY from Aliivibrio fischeri (strain MJ11) (Vibrio fischeri).